The primary structure comprises 350 residues: MSEDRSKAYTDAGVDINAGNALVSRIKSIVARTHTNGVISDIGGFGGLFKPDLAGMDEPVLVSSTDGVGTKLKCAFQFGKHDTVGIDLVAMSVNDILVQGARPLFFLDYFATGKLDVDVAASVISGVAEGCRRASCALLGGETAEMPEMYAPGEYDLAGFCVGLVDNTRIVDGSSIRVGDSIIGIASTGLHSNGYSLARKVLAQSGLNGNDPLPGSDRTVAEVLLEPTAIYVDIVRSVMRDFAIKGMVHVTGGGFYDNIPRVLPATVEAHIDFGSWTVPPVFNWLLAQGNLTWPEMLQIFNCGIGYIMIVSPDVCDEVLGRVNAMHAQAWRIGSIGRRRDKAAEQVQVAF.

The protein belongs to the AIR synthase family.

It localises to the cytoplasm. The enzyme catalyses 2-formamido-N(1)-(5-O-phospho-beta-D-ribosyl)acetamidine + ATP = 5-amino-1-(5-phospho-beta-D-ribosyl)imidazole + ADP + phosphate + H(+). The protein operates within purine metabolism; IMP biosynthesis via de novo pathway; 5-amino-1-(5-phospho-D-ribosyl)imidazole from N(2)-formyl-N(1)-(5-phospho-D-ribosyl)glycinamide: step 2/2. This is Phosphoribosylformylglycinamidine cyclo-ligase from Nitratidesulfovibrio vulgaris (strain DSM 19637 / Miyazaki F) (Desulfovibrio vulgaris).